We begin with the raw amino-acid sequence, 88 residues long: Small ribosomal subunit protein bS16c (88 aa).

Belongs to the bacterial ribosomal protein bS16 family.

The protein localises to the plastid. Its subcellular location is the chloroplast. In Jasminum nudiflorum (Winter jasmine), this protein is Small ribosomal subunit protein bS16c.